A 226-amino-acid polypeptide reads, in one-letter code: Pathogenesis-related protein R minor form (226 aa).

An N-terminal signal peptide occupies residues 1-25 (MNFLKSFPFYAFLCFGQYFVAVTHA). Disulfide bonds link Cys34-Cys225, Cys75-Cys85, Cys90-Cys96, Cys140-Cys214, Cys145-Cys197, Cys153-Cys163, Cys167-Cys176, and Cys177-Cys184.

This sequence belongs to the thaumatin family.

The protein resides in the vacuole. In Nicotiana tabacum (Common tobacco), this protein is Pathogenesis-related protein R minor form.